The primary structure comprises 354 residues: Sulfate/thiosulfate import ATP-binding protein CysA 2 (354 aa).

Positions 3 to 237 (IHIQQVNKHF…PSNPFVYEFL (235 aa)) constitute an ABC transporter domain. An ATP-binding site is contributed by 35-42 (GPSGSGKT).

The protein belongs to the ABC transporter superfamily. Sulfate/tungstate importer (TC 3.A.1.6) family. As to quaternary structure, the complex is composed of two ATP-binding proteins (CysA), two transmembrane proteins (CysT and CysW) and a solute-binding protein (CysP).

The protein resides in the cell inner membrane. The enzyme catalyses sulfate(out) + ATP + H2O = sulfate(in) + ADP + phosphate + H(+). It carries out the reaction thiosulfate(out) + ATP + H2O = thiosulfate(in) + ADP + phosphate + H(+). Functionally, part of the ABC transporter complex CysAWTP involved in sulfate/thiosulfate import. Responsible for energy coupling to the transport system. This Shewanella oneidensis (strain ATCC 700550 / JCM 31522 / CIP 106686 / LMG 19005 / NCIMB 14063 / MR-1) protein is Sulfate/thiosulfate import ATP-binding protein CysA 2.